Reading from the N-terminus, the 359-residue chain is UDP-N-acetylglucosamine--N-acetylmuramyl-(pentapeptide) pyrophosphoryl-undecaprenol N-acetylglucosamine transferase (359 aa).

UDP-N-acetyl-alpha-D-glucosamine-binding positions include 15–17, N127, R166, S191, I245, 264–269, and Q290; these read TGG and ALTVSE.

Belongs to the glycosyltransferase 28 family. MurG subfamily.

The protein resides in the cell inner membrane. The catalysed reaction is di-trans,octa-cis-undecaprenyl diphospho-N-acetyl-alpha-D-muramoyl-L-alanyl-D-glutamyl-meso-2,6-diaminopimeloyl-D-alanyl-D-alanine + UDP-N-acetyl-alpha-D-glucosamine = di-trans,octa-cis-undecaprenyl diphospho-[N-acetyl-alpha-D-glucosaminyl-(1-&gt;4)]-N-acetyl-alpha-D-muramoyl-L-alanyl-D-glutamyl-meso-2,6-diaminopimeloyl-D-alanyl-D-alanine + UDP + H(+). It functions in the pathway cell wall biogenesis; peptidoglycan biosynthesis. Its function is as follows. Cell wall formation. Catalyzes the transfer of a GlcNAc subunit on undecaprenyl-pyrophosphoryl-MurNAc-pentapeptide (lipid intermediate I) to form undecaprenyl-pyrophosphoryl-MurNAc-(pentapeptide)GlcNAc (lipid intermediate II). The protein is UDP-N-acetylglucosamine--N-acetylmuramyl-(pentapeptide) pyrophosphoryl-undecaprenol N-acetylglucosamine transferase of Pseudomonas entomophila (strain L48).